Reading from the N-terminus, the 287-residue chain is Aromatic amino acid exporter YddG (287 aa).

At 1 to 5 the chain is on the cytoplasmic side; it reads MSRSS. A helical membrane pass occupies residues 6 to 24; the sequence is ATLIGFTAILLWSTLALAT. An EamA 1 domain is found at 7–136; that stretch reads TLIGFTAILL…MGLAGTVVLL (130 aa). Topologically, residues 25-31 are periplasmic; that stretch reads SSTGAVP. A helical membrane pass occupies residues 32–54; the sequence is PFLLTALTFTIGGAVGIAAGLAR. Over 55–65 the chain is Cytoplasmic; the sequence is GVGLSVLRQPW. A helical transmembrane segment spans residues 66-86; the sequence is PVWVHGIGGLFGYHFFYFSAL. The Periplasmic portion of the chain corresponds to 87–90; it reads KLAP. A helical membrane pass occupies residues 91-111; it reads PAEAGLVAYLWPLLIVLFSAF. Topologically, residues 112-118 are cytoplasmic; the sequence is LPGERLR. The helical transmembrane segment at 119–139 threads the bilayer; it reads PAHVAGALMGLAGTVVLLGAR. Residues 140-149 lie on the Periplasmic side of the membrane; that stretch reads AGGFGFAPEY. Residues 150–170 form a helical membrane-spanning segment; sequence VPGYLAAAACAVIWSVYSVAS. Residues 151 to 281 form the EamA 2 domain; sequence PGYLAAAACA…ALIVGGAAVA (131 aa). Residues 171–176 lie on the Cytoplasmic side of the membrane; sequence RRFARV. The chain crosses the membrane as a helical span at residues 177-198; it reads PTEVVAGFCLATAALSALCHIL. The Periplasmic portion of the chain corresponds to 199–208; that stretch reads FEPSVWPVGS. A helical membrane pass occupies residues 209-233; it reads EWLAVVALGIGPVGIAFYTWDIGMK. Topologically, residues 234–236 are cytoplasmic; the sequence is RGD. Residues 237–258 traverse the membrane as a helical segment; that stretch reads VRLLGVLSYAAPVLSTLLLVVA. Over 259-264 the chain is Periplasmic; sequence GFAAPS. Residues 265-284 traverse the membrane as a helical segment; it reads GALAIACALIVGGAAVATLL. Over 285-287 the chain is Cytoplasmic; that stretch reads ARR.

This sequence belongs to the drug/metabolite transporter (DMT) superfamily. Aromatic amino acid/paraquat exporter (ArAA/P-E) (TC 2.A.7.17) family.

The protein resides in the cell inner membrane. It carries out the reaction L-threonine(in) = L-threonine(out). The enzyme catalyses L-methionine(in) = L-methionine(out). The catalysed reaction is L-lysine(in) = L-lysine(out). It catalyses the reaction L-glutamate(out) = L-glutamate(in). Its function is as follows. Amino acid transporter with broad substrate specificity. Can transport various amino acids, including L-threonine, L-methionine, L-lysine and L-glutamate. This Ancylobacter novellus (strain ATCC 8093 / DSM 506 / JCM 20403 / CCM 1077 / IAM 12100 / NBRC 12443 / NCIMB 10456) (Starkeya novella) protein is Aromatic amino acid exporter YddG.